A 235-amino-acid chain; its full sequence is Rab-like protein 3 (235 aa).

The tract at residues 1–235 (MASLDRVKVL…GGNFKSLHYD (235 aa)) is small GTPase-like. GTP is bound by residues 16–21 (GVGKSS), 148–150 (KLD), and 179–180 (DC).

This sequence belongs to the small GTPase superfamily. Rab family. As to quaternary structure, homodimer.

Required for KRAS signaling regulation and modulation of cell proliferation. Regulator of KRAS prenylation, and probably prenylation of other small GTPases. Required for lymphocyte development and function. Not required for myeloid cell development. The polypeptide is Rab-like protein 3 (rabl3) (Xenopus laevis (African clawed frog)).